We begin with the raw amino-acid sequence, 455 residues long: Anaerobic glycerol-3-phosphate dehydrogenase subunit B (455 aa).

Belongs to the anaerobic G-3-P dehydrogenase subunit B family. As to quaternary structure, composed of a catalytic GlpA/B dimer and of membrane bound GlpC. Requires FMN as cofactor.

It carries out the reaction a quinone + sn-glycerol 3-phosphate = dihydroxyacetone phosphate + a quinol. It functions in the pathway polyol metabolism; glycerol degradation via glycerol kinase pathway; glycerone phosphate from sn-glycerol 3-phosphate (anaerobic route): step 1/1. In terms of biological role, conversion of glycerol 3-phosphate to dihydroxyacetone. Uses fumarate or nitrate as electron acceptor. In Aliivibrio fischeri (strain MJ11) (Vibrio fischeri), this protein is Anaerobic glycerol-3-phosphate dehydrogenase subunit B.